The following is a 460-amino-acid chain: Keratin, type I cytoskeletal 27 (460 aa).

Positions 1–83 are head; the sequence is MSVRFSSASR…GNEHGLLSGN (83 aa). A coil 1A region spans residues 84 to 119; it reads EKVTMQNLNDRLASYLDNVRALEEANADLEQKIKGW. Residues 84-399 form the IF rod domain; that stretch reads EKVTMQNLND…RLIDGEDGSC (316 aa). The segment at 120-141 is linker 1; sequence YEKFGPGSCRGLDHDYSRYFTV. The tract at residues 142 to 233 is coil 1B; it reads IDDLRNQIIS…KNHEEEMKAL (92 aa). The interval 234–256 is linker 12; that stretch reads QCAAGGNVNVEMNAAPGVDLTVL. The segment at 257 to 395 is coil 2; it reads LNNMRAEYEA…ETYCRLIDGE (139 aa). The tract at residues 396–460 is tail; the sequence is DGSCAKSKGY…NVKSEQRVPS (65 aa). The interval 435-460 is disordered; sequence LSSRVHSVEEKSTKVNNVKSEQRVPS. Residues 448 to 460 show a composition bias toward polar residues; the sequence is KVNNVKSEQRVPS.

The protein belongs to the intermediate filament family. In terms of assembly, heterotetramer of two type I and two type II keratins. Interacts with KRT6A to form filaments.

It localises to the cytoplasm. Essential for the proper assembly of type I and type II keratin protein complexes and formation of keratin intermediate filaments in the inner root sheath (irs). This is Keratin, type I cytoskeletal 27 from Bos taurus (Bovine).